Here is a 371-residue protein sequence, read N- to C-terminus: Carbamoyl phosphate synthase small chain (371 aa).

The segment at 1–182 (MGVHKKGYLV…KNPIVHTPKN (182 aa)) is CPSase. Residues serine 49, glycine 235, and glycine 237 each contribute to the L-glutamine site. Residues 186–371 (RVVVLDLGVK…EFVKILEGRK (186 aa)) enclose the Glutamine amidotransferase type-1 domain. Cysteine 263 functions as the Nucleophile in the catalytic mechanism. L-glutamine-binding residues include leucine 264, glutamine 267, asparagine 305, glycine 307, and tyrosine 308. Residues histidine 346 and glutamate 348 contribute to the active site.

This sequence belongs to the CarA family. As to quaternary structure, composed of two chains; the small (or glutamine) chain promotes the hydrolysis of glutamine to ammonia, which is used by the large (or ammonia) chain to synthesize carbamoyl phosphate. Tetramer of heterodimers (alpha,beta)4.

It catalyses the reaction hydrogencarbonate + L-glutamine + 2 ATP + H2O = carbamoyl phosphate + L-glutamate + 2 ADP + phosphate + 2 H(+). It carries out the reaction L-glutamine + H2O = L-glutamate + NH4(+). The protein operates within amino-acid biosynthesis; L-arginine biosynthesis; carbamoyl phosphate from bicarbonate: step 1/1. It functions in the pathway pyrimidine metabolism; UMP biosynthesis via de novo pathway; (S)-dihydroorotate from bicarbonate: step 1/3. Functionally, small subunit of the glutamine-dependent carbamoyl phosphate synthetase (CPSase). CPSase catalyzes the formation of carbamoyl phosphate from the ammonia moiety of glutamine, carbonate, and phosphate donated by ATP, constituting the first step of 2 biosynthetic pathways, one leading to arginine and/or urea and the other to pyrimidine nucleotides. The small subunit (glutamine amidotransferase) binds and cleaves glutamine to supply the large subunit with the substrate ammonia. The chain is Carbamoyl phosphate synthase small chain from Pyrococcus furiosus (strain ATCC 43587 / DSM 3638 / JCM 8422 / Vc1).